The sequence spans 227 residues: ATP-dependent dethiobiotin synthetase BioD (227 aa).

13–18 (NIGKTI) lines the ATP pocket. Thr17 contacts Mg(2+). Lys38 is an active-site residue. Ser42 provides a ligand contact to substrate. ATP contacts are provided by residues Asp55, 117 to 120 (EGFG), 177 to 178 (NH), 206 to 208 (PFI), and Asn213. 2 residues coordinate Mg(2+): Asp55 and Glu117.

The protein belongs to the dethiobiotin synthetase family. In terms of assembly, homodimer. The cofactor is Mg(2+).

Its subcellular location is the cytoplasm. The enzyme catalyses (7R,8S)-7,8-diammoniononanoate + CO2 + ATP = (4R,5S)-dethiobiotin + ADP + phosphate + 3 H(+). The protein operates within cofactor biosynthesis; biotin biosynthesis; biotin from 7,8-diaminononanoate: step 1/2. Its function is as follows. Catalyzes a mechanistically unusual reaction, the ATP-dependent insertion of CO2 between the N7 and N8 nitrogen atoms of 7,8-diaminopelargonic acid (DAPA, also called 7,8-diammoniononanoate) to form a ureido ring. This is ATP-dependent dethiobiotin synthetase BioD from Wigglesworthia glossinidia brevipalpis.